Reading from the N-terminus, the 314-residue chain is tRNA uridine(34) hydroxylase (314 aa).

Positions 140-234 constitute a Rhodanese domain; the sequence is ARDDVILIDT…YLEETPPDES (95 aa). Catalysis depends on Cys-194, which acts as the Cysteine persulfide intermediate.

It belongs to the TrhO family.

The enzyme catalyses uridine(34) in tRNA + AH2 + O2 = 5-hydroxyuridine(34) in tRNA + A + H2O. Catalyzes oxygen-dependent 5-hydroxyuridine (ho5U) modification at position 34 in tRNAs. The chain is tRNA uridine(34) hydroxylase from Acinetobacter baumannii (strain AYE).